The chain runs to 476 residues: Monodehydroascorbate reductase 2, peroxisomal (476 aa).

The Cytoplasmic segment spans residues 1–3 (MGR). The helical transmembrane segment at 4–24 (AFVHVILGGGVAAGYAALEFA) threads the bilayer. FAD contacts are provided by residues 12–15 (GGVA), E40, R47, K52, and 146–147 (RN). Residues 25 to 447 (RRGGYSRGEL…GGLALGEKPT (423 aa)) lie on the Peroxisomal side of the membrane. NAD(+)-binding positions include 171 to 177 (GGYIGME), E195, R201, and G260. NADP(+) is bound at residue 173 to 177 (YIGME). Residues R201 and G260 each coordinate NADP(+). D297 is an FAD binding site. 314 to 315 (EH) is a binding site for NAD(+). Residue 314–315 (EH) coordinates NADP(+). V316 lines the FAD pocket. R320 is an L-ascorbate binding site. Y346 contacts FAD. Y346 serves as a coordination point for NAD(+). Y346 is an NADP(+) binding site. R348 contributes to the L-ascorbate binding site. Residues 448–468 (YVWHATAGVIAAASIAAFGYW) form a helical membrane-spanning segment. Residues 469-476 (YGRKRRRW) lie on the Cytoplasmic side of the membrane.

This sequence belongs to the FAD-dependent oxidoreductase family. Requires FAD as cofactor.

It localises to the peroxisome membrane. It catalyses the reaction 2 monodehydro-L-ascorbate radical + NADH + H(+) = 2 L-ascorbate + NAD(+). Catalyzes the conversion of monodehydroascorbate to ascorbate, oxidizing NADH in the process. Ascorbate is a major antioxidant against reactive oxygen species (ROS) and nitric oxide (NO). The polypeptide is Monodehydroascorbate reductase 2, peroxisomal (Oryza sativa subsp. japonica (Rice)).